Here is a 93-residue protein sequence, read N- to C-terminus: uncharacterized protein (93 aa).

This is an uncharacterized protein from Haemophilus influenzae (Bacteriophage HP1).